The chain runs to 352 residues: tRNA-specific 2-thiouridylase MnmA (352 aa).

ATP contacts are provided by residues 9–16 and Met35; that span reads ALSGGVDS. The Nucleophile role is filled by Cys96. Residues Cys96 and Cys192 are joined by a disulfide bond. Gly120 contacts ATP. The tract at residues 142–144 is interaction with tRNA; the sequence is KDQ. Cys192 (cysteine persulfide intermediate) is an active-site residue. An interaction with tRNA region spans residues 299-300; that stretch reads RY.

This sequence belongs to the MnmA/TRMU family.

It localises to the cytoplasm. The catalysed reaction is S-sulfanyl-L-cysteinyl-[protein] + uridine(34) in tRNA + AH2 + ATP = 2-thiouridine(34) in tRNA + L-cysteinyl-[protein] + A + AMP + diphosphate + H(+). Its function is as follows. Catalyzes the 2-thiolation of uridine at the wobble position (U34) of tRNA, leading to the formation of s(2)U34. This is tRNA-specific 2-thiouridylase MnmA from Acidithiobacillus ferrooxidans (strain ATCC 23270 / DSM 14882 / CIP 104768 / NCIMB 8455) (Ferrobacillus ferrooxidans (strain ATCC 23270)).